An 815-amino-acid polypeptide reads, in one-letter code: Leucine--tRNA ligase (815 aa).

The 'HIGH' region signature appears at 40-50; sequence PYPSGRIHMGH. The 'KMSKS' region motif lies at 583 to 587; sequence KMSKS. An ATP-binding site is contributed by Lys-586.

This sequence belongs to the class-I aminoacyl-tRNA synthetase family.

The protein localises to the cytoplasm. It carries out the reaction tRNA(Leu) + L-leucine + ATP = L-leucyl-tRNA(Leu) + AMP + diphosphate. In Nitratiruptor sp. (strain SB155-2), this protein is Leucine--tRNA ligase.